Consider the following 397-residue polypeptide: Acetate kinase (397 aa).

Residue asparagine 8 coordinates Mg(2+). Lysine 15 contributes to the ATP binding site. Position 89 (arginine 89) interacts with substrate. Residue aspartate 146 is the Proton donor/acceptor of the active site. ATP is bound by residues 206 to 210, 283 to 285, and 331 to 335; these read HVGNG, DMR, and GMGEN. Residue glutamate 383 participates in Mg(2+) binding.

Belongs to the acetokinase family. As to quaternary structure, homodimer. Mg(2+) serves as cofactor. Requires Mn(2+) as cofactor.

It is found in the cytoplasm. The catalysed reaction is acetate + ATP = acetyl phosphate + ADP. It functions in the pathway metabolic intermediate biosynthesis; acetyl-CoA biosynthesis; acetyl-CoA from acetate: step 1/2. Catalyzes the formation of acetyl phosphate from acetate and ATP. Can also catalyze the reverse reaction. This Streptococcus agalactiae serotype III (strain NEM316) protein is Acetate kinase.